We begin with the raw amino-acid sequence, 752 residues long: Zinc finger BED domain-containing protein RICESLEEPER 3 (752 aa).

The segment at 106 to 166 (RKKSVVWEHF…ASCPMLKNED (61 aa)) adopts a BED-type zinc-finger fold. Residues Cys129, Cys132, His153, and Cys159 each coordinate Zn(2+). The interval 647–733 (ELEQYLEEAL…EALFCAKDWL (87 aa)) is HATC (Hobo-Ac-Tam3) domain.

In terms of assembly, homodimer.

It localises to the nucleus. Its function is as follows. Transposase-like protein that is essential for plant growth and development. May regulate global gene expression by recruiting other cellular factors. The chain is Zinc finger BED domain-containing protein RICESLEEPER 3 from Oryza sativa subsp. japonica (Rice).